The following is a 262-amino-acid chain: Expansin-A7 (262 aa).

An N-terminal signal peptide occupies residues 1 to 30; it reads MGPISSSWSFNKFFSIVFVVFAISGEFVAG. The 113-residue stretch at 55-167 folds into the Expansin-like EG45 domain; it reads GGACGYGNLF…RRVPCQRSGG (113 aa). Disulfide bonds link cysteine 58-cysteine 86, cysteine 89-cysteine 162, and cysteine 94-cysteine 100. In terms of domain architecture, Expansin-like CBD spans 177 to 257; sequence YWLLIFVMNV…NWSGGKTYKS (81 aa).

It belongs to the expansin family. Expansin A subfamily.

It localises to the secreted. The protein resides in the cell wall. It is found in the membrane. Its function is as follows. Causes loosening and extension of plant cell walls by disrupting non-covalent bonding between cellulose microfibrils and matrix glucans. No enzymatic activity has been found. The sequence is that of Expansin-A7 (EXPA7) from Arabidopsis thaliana (Mouse-ear cress).